We begin with the raw amino-acid sequence, 359 residues long: Phospho-N-acetylmuramoyl-pentapeptide-transferase (359 aa).

10 helical membrane-spanning segments follow: residues 3 to 23 (QILIAVGLALAVSILLTPVLI), 55 to 75 (VAILAGIWVSYLGTHLVGLAL), 84 to 104 (GLLVLGLATALGIVGFIDDLI), 120 to 140 (TVGILAAALLFGVLALQFGNA), 156 to 176 (IATVTLAPLIFVLFCVVLVSA), 187 to 207 (LDGLAAGAMAMVCAAYVLITF), 231 to 251 (LALVAAAAAGACIGFLWWNAA), 255 to 275 (IFMGDTGSLALGGIIAGLSVT), 280 to 300 (ILAVVLGALFVAEVTSVVVQI), and 334 to 354 (FWLLTAIACGLGVALFYGEWL).

Belongs to the glycosyltransferase 4 family. MraY subfamily. The cofactor is Mg(2+).

It localises to the cell membrane. It catalyses the reaction UDP-N-acetyl-alpha-D-muramoyl-L-alanyl-gamma-D-glutamyl-meso-2,6-diaminopimeloyl-D-alanyl-D-alanine + di-trans,octa-cis-undecaprenyl phosphate = di-trans,octa-cis-undecaprenyl diphospho-N-acetyl-alpha-D-muramoyl-L-alanyl-D-glutamyl-meso-2,6-diaminopimeloyl-D-alanyl-D-alanine + UMP. It functions in the pathway cell wall biogenesis; peptidoglycan biosynthesis. In terms of biological role, catalyzes the initial step of the lipid cycle reactions in the biosynthesis of the cell wall peptidoglycan: transfers peptidoglycan precursor phospho-MurNAc-pentapeptide from UDP-MurNAc-pentapeptide onto the lipid carrier undecaprenyl phosphate, yielding undecaprenyl-pyrophosphoryl-MurNAc-pentapeptide, known as lipid I. The sequence is that of Phospho-N-acetylmuramoyl-pentapeptide-transferase from Mycobacterium sp. (strain JLS).